The sequence spans 497 residues: WASH complex subunit homolog 1 (497 aa).

Residues 306–497 (EASEPTEAEA…PPNFDDEEWD (192 aa)) form a disordered region. A compositionally biased stretch (pro residues) spans 323-339 (LPPPPPPMKLDPSPQPA). Low complexity predominate over residues 341-350 (TPVEITEIPP). Positions 351-372 (IISPPAPPPPPPPPPPPPPPQT) are enriched in pro residues. In terms of domain architecture, WH2 spans 390–412 (GRSDLMAAIRAAGGAGNAKLSRI).

The protein belongs to the WASH1 family. Component of the WASH core complex. Component of the DHIC (ddl-1-containing hsf-1 inhibitory) complex, which contains at least ddl-1, ddl-2, hsb-1 and hsf-1. Within the complex, interacts with ddl-1. Formation of the DHIC may be dependent upon the Insulin/IGF-1-like signaling (IIS) mediated pathway. In terms of tissue distribution, expressed in several neurons located throughout the body.

Its function is as follows. Acts as a component of the WASH core complex that functions as a nucleation-promoting factor (NPF) at the surface of endosomes, where it recruits and activates the Arp2/3 complex to induce actin polymerization, playing a key role in the fission of tubules that serve as transport intermediates during endosome sorting. Acts as a component of the DHIC (ddl-1-containing hsf-1 inhibitory complex) which modulates lifespan by sequestering the heat shock transcription factor hsf-1 to negatively regulate its binding to DNA and its transcriptional activity. This Caenorhabditis elegans protein is WASH complex subunit homolog 1.